Reading from the N-terminus, the 156-residue chain is MTELKLIHIFTDGSCLGNPGPGGYGIVMNYKGHTKEMSDGFALTTNNRMELLAPIIALESLKEPCQVVLTSDSQYMRQGIMTWIHGWKKKGWMTSNRTPVKNVDLWKRLDKASQMHTIDWQWVKGHAGHAENERCDVLARTAAESKPTQPDLGYQP.

Positions 3–144 constitute an RNase H type-1 domain; the sequence is ELKLIHIFTD…CDVLARTAAE (142 aa). Mg(2+)-binding residues include D12, E50, D72, and D136.

The protein belongs to the RNase H family. As to quaternary structure, monomer. The cofactor is Mg(2+).

The protein localises to the cytoplasm. It carries out the reaction Endonucleolytic cleavage to 5'-phosphomonoester.. In terms of biological role, endonuclease that specifically degrades the RNA of RNA-DNA hybrids. The protein is Ribonuclease H of Shewanella baltica (strain OS223).